We begin with the raw amino-acid sequence, 107 residues long: MPRFTIHDLAATIDARAASGGDASYTRKLLDKGSGHCAKKFGEEAVETVIAAIENDRHHLIAEGADLMFHFLVLLKARGVTFEDIEFALAQRTTMSGLEEKAARNRE.

The protein belongs to the PRA-PH family.

Its subcellular location is the cytoplasm. It catalyses the reaction 1-(5-phospho-beta-D-ribosyl)-ATP + H2O = 1-(5-phospho-beta-D-ribosyl)-5'-AMP + diphosphate + H(+). Its pathway is amino-acid biosynthesis; L-histidine biosynthesis; L-histidine from 5-phospho-alpha-D-ribose 1-diphosphate: step 2/9. The polypeptide is Phosphoribosyl-ATP pyrophosphatase (Nitrobacter hamburgensis (strain DSM 10229 / NCIMB 13809 / X14)).